A 190-amino-acid polypeptide reads, in one-letter code: Elongation factor P (190 aa).

The residue at position 34 (Lys-34) is an N6-(3,6-diaminohexanoyl)-5-hydroxylysine.

It belongs to the elongation factor P family. In terms of processing, may be beta-lysylated on the epsilon-amino group of Lys-34 by the combined action of EpmA and EpmB, and then hydroxylated on the C5 position of the same residue by EpmC (if this protein is present). Lysylation is critical for the stimulatory effect of EF-P on peptide-bond formation. The lysylation moiety may extend toward the peptidyltransferase center and stabilize the terminal 3-CCA end of the tRNA. Hydroxylation of the C5 position on Lys-34 may allow additional potential stabilizing hydrogen-bond interactions with the P-tRNA.

The protein localises to the cytoplasm. It participates in protein biosynthesis; polypeptide chain elongation. Its function is as follows. Involved in peptide bond synthesis. Alleviates ribosome stalling that occurs when 3 or more consecutive Pro residues or the sequence PPG is present in a protein, possibly by augmenting the peptidyl transferase activity of the ribosome. Modification of Lys-34 is required for alleviation. This chain is Elongation factor P, found in Psychrobacter arcticus (strain DSM 17307 / VKM B-2377 / 273-4).